Consider the following 148-residue polypeptide: Snaclec 2 (148 aa).

Positions 1–23 are cleaved as a signal peptide; that stretch reads MGRFIFVSFGLLVVFLSLSGTEA. Disulfide bonds link Cys-27-Cys-38, Cys-55-Cys-144, and Cys-121-Cys-136. The C-type lectin domain occupies 34–145; the sequence is YDQNCYKAFE…CSGTHSFVCK (112 aa).

This sequence belongs to the snaclec family. Heterodimer; disulfide-linked. In terms of tissue distribution, expressed by the venom gland.

The protein resides in the secreted. In terms of biological role, interferes with one step of hemostasis (modulation of platelet aggregation, or coagulation cascade, for example). This Echis ocellatus (Ocellated saw-scaled viper) protein is Snaclec 2.